A 314-amino-acid polypeptide reads, in one-letter code: Ecto-ADP-ribosyltransferase 4 (314 aa).

An N-terminal signal peptide occupies residues 1 to 46 (MGPLINRCKKILLPTTVPPATMRIWLLGGPLPFLLLLSGLQRPTEG). Disulfide bonds link Cys-69-Cys-280 and Cys-182-Cys-231. Residues 91–276 (KNYFRMWQKA…LQLRSTGNLS (186 aa)) form the TR mART core domain. Asn-114 carries an N-linked (GlcNAc...) asparagine glycan. Tyr-126 lines the NAD(+) pocket. N-linked (GlcNAc...) asparagine glycosylation is present at Asn-178. Gln-206 is an NAD(+) binding site. Asn-222 carries N-linked (GlcNAc...) asparagine glycosylation. NAD(+) is bound at residue Ser-240. Asn-257 and Asn-274 each carry an N-linked (GlcNAc...) asparagine glycan. Ala-285 carries GPI-anchor amidated alanine lipidation. The propeptide at 286-314 (SSKKCIPDPIAIASLSFLTSVIIFSKSRV) is removed in mature form.

The protein belongs to the Arg-specific ADP-ribosyltransferase family.

The protein localises to the cell membrane. The catalysed reaction is L-arginyl-[protein] + NAD(+) = N(omega)-(ADP-D-ribosyl)-L-arginyl-[protein] + nicotinamide + H(+). This chain is Ecto-ADP-ribosyltransferase 4 (ART4), found in Pan troglodytes (Chimpanzee).